The following is a 399-amino-acid chain: Elongation factor Tu (399 aa).

The tr-type G domain maps to 10 to 207; that stretch reads KPHLNIGTIG…AVDNYVPEPQ (198 aa). Positions 19–26 are G1; the sequence is GHIDHGKT. 19-26 contacts GTP; the sequence is GHIDHGKT. T26 is a binding site for Mg(2+). A G2 region spans residues 60-64; it reads GITIN. A G3 region spans residues 81 to 84; the sequence is DCPG. GTP is bound by residues 81 to 85 and 136 to 139; these read DCPGH and NKVD. The tract at residues 136 to 139 is G4; that stretch reads NKVD. The G5 stretch occupies residues 174 to 176; sequence SAL.

It belongs to the TRAFAC class translation factor GTPase superfamily. Classic translation factor GTPase family. EF-Tu/EF-1A subfamily. Monomer.

The protein resides in the cytoplasm. The catalysed reaction is GTP + H2O = GDP + phosphate + H(+). Its function is as follows. GTP hydrolase that promotes the GTP-dependent binding of aminoacyl-tRNA to the A-site of ribosomes during protein biosynthesis. This chain is Elongation factor Tu, found in Kosmotoga olearia (strain ATCC BAA-1733 / DSM 21960 / TBF 19.5.1).